We begin with the raw amino-acid sequence, 192 residues long: Phosphoheptose isomerase (192 aa).

The region spanning 35–192 (LIETLENQGK…CIERHFANKN (158 aa)) is the SIS domain. Substrate is bound at residue 50-52 (NGG). Zn(2+) is bound by residues His59 and Glu63. Residues Glu63, 92 to 93 (ND), 118 to 120 (STS), Ser123, and Gln170 contribute to the substrate site. Zn(2+) contacts are provided by Gln170 and His178.

Belongs to the SIS family. GmhA subfamily. Homotetramer. Zn(2+) is required as a cofactor.

The protein localises to the cytoplasm. It catalyses the reaction 2 D-sedoheptulose 7-phosphate = D-glycero-alpha-D-manno-heptose 7-phosphate + D-glycero-beta-D-manno-heptose 7-phosphate. The protein operates within carbohydrate biosynthesis; D-glycero-D-manno-heptose 7-phosphate biosynthesis; D-glycero-alpha-D-manno-heptose 7-phosphate and D-glycero-beta-D-manno-heptose 7-phosphate from sedoheptulose 7-phosphate: step 1/1. In terms of biological role, catalyzes the isomerization of sedoheptulose 7-phosphate in D-glycero-D-manno-heptose 7-phosphate. The sequence is that of Phosphoheptose isomerase from Helicobacter pylori (strain Shi470).